A 334-amino-acid chain; its full sequence is N-acetyl-gamma-glutamyl-phosphate reductase (334 aa).

Cys154 is a catalytic residue.

This sequence belongs to the NAGSA dehydrogenase family. Type 1 subfamily.

It is found in the cytoplasm. The enzyme catalyses N-acetyl-L-glutamate 5-semialdehyde + phosphate + NADP(+) = N-acetyl-L-glutamyl 5-phosphate + NADPH + H(+). Its pathway is amino-acid biosynthesis; L-arginine biosynthesis; N(2)-acetyl-L-ornithine from L-glutamate: step 3/4. Functionally, catalyzes the NADPH-dependent reduction of N-acetyl-5-glutamyl phosphate to yield N-acetyl-L-glutamate 5-semialdehyde. This is N-acetyl-gamma-glutamyl-phosphate reductase from Escherichia coli O157:H7.